We begin with the raw amino-acid sequence, 240 residues long: SEVVSFSFTKFNPNPKDIILQGDALVTSKGKLQLTKVKDGKPVDHSLGRALYAAPIHIWDDSTDRVASFATSFSFVVEAPDESKTADGIAFFLAPPDTQPQKDGGFLGLFNDSNKSIQTVAVEFDTFSNTWDPSARHIGINVNSIESMKYVKWGWENGKVANVYISYEASTKTLTASLTYPSNATSYIVSANVDLKSALPEWVRVGFSATSGLSRDHVETHDVLDWSFTSTLQAPSDDSN.

Asparagine 111 is a glycosylation site (N-linked (GlcNAc...) asparagine). 2 residues coordinate Mn(2+): glutamate 123 and aspartate 125. Positions 125, 129, and 132 each coordinate Ca(2+). Aspartate 132 and histidine 137 together coordinate Mn(2+). Residue asparagine 183 is glycosylated (N-linked (GlcNAc...) asparagine).

Belongs to the leguminous lectin family. Homotetramer. Post-translationally, partially N-glycosylated at Asn-111 and Asn-183 with the heptasaccharide [(beta-xylosyl-1,2)(alpha-mannosyl-1,6)(alpha-mannosyl-1,3)]beta-manosyl-1,4-GlcNAC-beta-1,4-GlcNAc-beta-1,4 [alpha-fucosyl-1,3]GlcNAc. A small proportion of alpha chains are proteolytically cleaved at 114-115 into gamma and beta chains. This is probably dependent on the deglycosylation of Asn-111. In terms of tissue distribution, seed.

Lectin that binds galactose. The chain is Seed lectin from Vatairea macrocarpa.